The sequence spans 406 residues: Zinc metalloprotease Rip1 (406 aa).

The helical transmembrane segment at 1-21 threads the bilayer; the sequence is MMFGIGIVLFALAILVSVALH. Residue H21 participates in Zn(2+) binding. The active site involves E22. Zn(2+) is bound at residue H25. Residues 108-128 traverse the membrane as a helical segment; that stretch reads PAMNFVIGLVLIYGIAIVWGL. A PDZ domain is found at 125–209; that stretch reads VWGLPNLHQP…RIEFKRDGRV (85 aa). D206 lines the Zn(2+) pocket. 2 helical membrane-spanning segments follow: residues 327 to 349 and 375 to 395; these read NFVL…IAVA and LMPA…LTVT.

The protein belongs to the peptidase M50B family. Zn(2+) is required as a cofactor.

The protein resides in the cell membrane. With respect to regulation, proteolysis is inhibited by Wag31; when Wag31 is non-functional oxidative stress increases proteolysis. Functionally, a probable intramembrane site-2 protease (S2P) that cleaves type-2 transmembrane proteins within their membrane-spanning domains. Degrades PbpB (PBP3, FtsI) under conditions of oxidatives stress; degradation is inhibited by Wag31-PbpB interaction. Also cleaves anti-sigma factors RskA, RslA and RslM. Site-1 proteases have not yet been identified in this organism. In terms of biological role, regulated intramembrane proteolysis (RIP) occurs when an extracytoplasmic signal (possibly oxidative stress) triggers a concerted proteolytic cascade to transmit information and elicit cellular responses. The membrane-spanning regulatory substrate protein (includes anti-sigma factors RskA, RslA, RsmA, and PbpB) is first cut extracytoplasmically (site-1 protease, S1P), then within the membrane itself (site-2 protease, S2P, this entry), while cytoplasmic proteases finish degrading the regulatory protein, liberating the effector protein (ECF sigma factors SigK, SigL and SigM). This chain is Zinc metalloprotease Rip1 (rip1), found in Mycolicibacterium smegmatis (strain ATCC 700084 / mc(2)155) (Mycobacterium smegmatis).